Consider the following 509-residue polypeptide: Maturase K (509 aa).

The protein belongs to the intron maturase 2 family. MatK subfamily.

Its subcellular location is the plastid. The protein resides in the chloroplast. Functionally, usually encoded in the trnK tRNA gene intron. Probably assists in splicing its own and other chloroplast group II introns. This chain is Maturase K, found in Solanum lycopersicum (Tomato).